A 103-amino-acid chain; its full sequence is Protein RALF-like 18 (103 aa).

The signal sequence occupies residues 1-32; the sequence is MMNNMKLLIIAVMIISAALLPALVVGSRPVKC. A propeptide spans 33-58 (removed in mature form); the sequence is DNCMDGGEKEEIMKMSSGVDVSHRIL. Cysteine 92 and cysteine 98 are joined by a disulfide.

The protein belongs to the plant rapid alkalinization factor (RALF) family. Proteolytically cleaved, probably by S1P, a subtilisin-like serine protease (subtilase).

It is found in the secreted. Its function is as follows. Cell signaling peptide that may regulate plant stress, growth, and development. Mediates a rapid alkalinization of extracellular space by mediating a transient increase in the cytoplasmic Ca(2+) concentration leading to a calcium-dependent signaling events through a cell surface receptor and a concomitant activation of some intracellular mitogen-activated protein kinases. The protein is Protein RALF-like 18 (RALFL18) of Arabidopsis thaliana (Mouse-ear cress).